The following is a 172-amino-acid chain: MSKENEVLLNEDIRAREVRCVGDDGTVYGVVSRDEALKIAEKQGLDLVLVAPDAKPPVCKIMDYGKFRYQQEKKQKEAKKKQKVIEIKEIKLSIKIAQNDINYKVKHAVEFLQDGKHVKFRVFLKGREMSTPEAGVAMLEKVWELVKDVADRDKEPLVEGRYVNMLVTPKKG.

The protein belongs to the IF-3 family. As to quaternary structure, monomer.

Its subcellular location is the cytoplasm. Its function is as follows. IF-3 binds to the 30S ribosomal subunit and shifts the equilibrium between 70S ribosomes and their 50S and 30S subunits in favor of the free subunits, thus enhancing the availability of 30S subunits on which protein synthesis initiation begins. This is Translation initiation factor IF-3 from Campylobacter curvus (strain 525.92).